A 1513-amino-acid polypeptide reads, in one-letter code: DNA-directed RNA polymerase subunit beta'' (1513 aa).

Positions 220, 296, 303, and 306 each coordinate Zn(2+). The segment at Arg644–Val769 is disordered. Over residues Asn659–Glu679 the composition is skewed to basic and acidic residues. Acidic residues predominate over residues Glu680–Glu707. A compositionally biased stretch (basic and acidic residues) spans Asn726–Thr737. Over residues Leu738–Asp767 the composition is skewed to acidic residues.

It belongs to the RNA polymerase beta' chain family. RpoC2 subfamily. In plastids the minimal PEP RNA polymerase catalytic core is composed of four subunits: alpha, beta, beta', and beta''. When a (nuclear-encoded) sigma factor is associated with the core the holoenzyme is formed, which can initiate transcription. The cofactor is Zn(2+).

It localises to the plastid. The protein localises to the chloroplast. It catalyses the reaction RNA(n) + a ribonucleoside 5'-triphosphate = RNA(n+1) + diphosphate. Its function is as follows. DNA-dependent RNA polymerase catalyzes the transcription of DNA into RNA using the four ribonucleoside triphosphates as substrates. The sequence is that of DNA-directed RNA polymerase subunit beta'' from Oryza nivara (Indian wild rice).